A 132-amino-acid polypeptide reads, in one-letter code: UPF0299 membrane protein KPN78578_25390 (132 aa).

4 consecutive transmembrane segments (helical) span residues 5–25, 38–60, 66–86, and 93–113; these read LTIIWQYLRAFVLIYACLYAG, GSIIGMLILFVLLALQIMPPQWV, ILIRYMALLFVPIGVGVMQYW, and LGPVVISCAISTLVVFVVVSW.

This sequence belongs to the UPF0299 family.

It localises to the cell inner membrane. In Klebsiella pneumoniae subsp. pneumoniae (strain ATCC 700721 / MGH 78578), this protein is UPF0299 membrane protein KPN78578_25390.